Reading from the N-terminus, the 876-residue chain is Phosphoenolpyruvate carboxylase (876 aa).

Catalysis depends on residues His-138 and Lys-543.

This sequence belongs to the PEPCase type 1 family. Mg(2+) is required as a cofactor.

It catalyses the reaction oxaloacetate + phosphate = phosphoenolpyruvate + hydrogencarbonate. Functionally, forms oxaloacetate, a four-carbon dicarboxylic acid source for the tricarboxylic acid cycle. In Pseudomonas fluorescens (strain Pf0-1), this protein is Phosphoenolpyruvate carboxylase.